Here is a 230-residue protein sequence, read N- to C-terminus: Large ribosomal subunit protein uL1 (230 aa).

It belongs to the universal ribosomal protein uL1 family. In terms of assembly, part of the 50S ribosomal subunit.

Its function is as follows. Binds directly to 23S rRNA. The L1 stalk is quite mobile in the ribosome, and is involved in E site tRNA release. Functionally, protein L1 is also a translational repressor protein, it controls the translation of the L11 operon by binding to its mRNA. This Bradyrhizobium sp. (strain BTAi1 / ATCC BAA-1182) protein is Large ribosomal subunit protein uL1.